The chain runs to 617 residues: Proline--tRNA ligase (617 aa).

The protein belongs to the class-II aminoacyl-tRNA synthetase family. ProS type 1 subfamily. In terms of assembly, homodimer.

It is found in the cytoplasm. It carries out the reaction tRNA(Pro) + L-proline + ATP = L-prolyl-tRNA(Pro) + AMP + diphosphate. In terms of biological role, catalyzes the attachment of proline to tRNA(Pro) in a two-step reaction: proline is first activated by ATP to form Pro-AMP and then transferred to the acceptor end of tRNA(Pro). As ProRS can inadvertently accommodate and process non-cognate amino acids such as alanine and cysteine, to avoid such errors it has two additional distinct editing activities against alanine. One activity is designated as 'pretransfer' editing and involves the tRNA(Pro)-independent hydrolysis of activated Ala-AMP. The other activity is designated 'posttransfer' editing and involves deacylation of mischarged Ala-tRNA(Pro). The misacylated Cys-tRNA(Pro) is not edited by ProRS. The polypeptide is Proline--tRNA ligase (Streptococcus pneumoniae serotype 19F (strain G54)).